We begin with the raw amino-acid sequence, 499 residues long: Lysine--tRNA ligase (499 aa).

Residues glutamate 408 and glutamate 415 each contribute to the Mg(2+) site.

Belongs to the class-II aminoacyl-tRNA synthetase family. Homodimer. The cofactor is Mg(2+).

The protein resides in the cytoplasm. It carries out the reaction tRNA(Lys) + L-lysine + ATP = L-lysyl-tRNA(Lys) + AMP + diphosphate. The chain is Lysine--tRNA ligase from Bacillus cereus (strain AH820).